The sequence spans 407 residues: MEDTTFLEGANLAGITTLMNNLHINEQANLEELEKQVMGKQQSFPTDHFDEELNGLAKSLGINFNDPEFSLDSPHSVISKKPSGRGRDKVHGGIRRDSVCTDSICSDSVCSGSIRSGSIRSGSIRNGSIRSGSVRDDSVRSGKTRRGLACNSSSRNDRGYSLSTHRKKYAESEASQKTAFSKRDRKNHYAESEYSEKSIKPSTKQVDRLINHLRSNGDPNSFYKKDHDYERKTKLVKLEKINMLLTYLGNEQISTDDIKIPTIDSSMQEIDDVIEMLTLRNVGIRYSSIAEEILIGLARGLEIVFDGTREIPFLNYRPDYTGLHNTFMIKLFKMRYETSQVVGNLVQNMSPLSKICLELGPSLLLYPALIRTKHKASEDLYNLLQKGPEDPFTAYNEIHETLKKNNK.

Disordered regions lie at residues 73–93 and 116–202; these read SPHSVISKKPSGRGRDKVHGG and SGSI…IKPS. Repeat copies occupy residues 112 to 116, 117 to 121, 122 to 126, 127 to 131, and 132 to 136. Residues 112 to 136 are 5 X 5 AA tandem repeats of G-[S]-[IV]-R-[DNS]; sequence GSIRSGSIRSGSIRNGSIRSGSVRD. Residues 116-132 show a composition bias toward low complexity; that stretch reads SGSIRSGSIRNGSIRSG. Positions 187–202 are enriched in basic and acidic residues; it reads NHYAESEYSEKSIKPS.

This sequence belongs to the asfivirus B407L family.

This is an uncharacterized protein from Ornithodoros (relapsing fever ticks).